Consider the following 213-residue polypeptide: Probable chemoreceptor glutamine deamidase CheD (213 aa).

Over residues 1-12 the composition is skewed to basic residues; the sequence is MNRHRPHSHRSK. The tract at residues 1–25 is disordered; the sequence is MNRHRPHSHRSKPASTQDQPDSVRR.

The protein belongs to the CheD family.

The catalysed reaction is L-glutaminyl-[protein] + H2O = L-glutamyl-[protein] + NH4(+). In terms of biological role, probably deamidates glutamine residues to glutamate on methyl-accepting chemotaxis receptors (MCPs), playing an important role in chemotaxis. The polypeptide is Probable chemoreceptor glutamine deamidase CheD (Rhodopseudomonas palustris (strain BisA53)).